The chain runs to 241 residues: Probable 2-phosphosulfolactate phosphatase (241 aa).

This sequence belongs to the ComB family. Mg(2+) is required as a cofactor.

The enzyme catalyses (2R)-O-phospho-3-sulfolactate + H2O = (2R)-3-sulfolactate + phosphate. In Gloeothece citriformis (strain PCC 7424) (Cyanothece sp. (strain PCC 7424)), this protein is Probable 2-phosphosulfolactate phosphatase.